We begin with the raw amino-acid sequence, 206 residues long: Holliday junction branch migration complex subunit RuvA (206 aa).

The domain I stretch occupies residues 1–62; sequence MYDYLKGLIT…EDAQVLYGFP (62 aa). The domain II stretch occupies residues 63–141; sequence NLDQRELFRK…SLLETIELPS (79 aa). The flexible linker stretch occupies residues 142–152; it reads TEDELPLFGVH. The segment at 153–206 is domain III; sequence PYKHELEEAILALAALGYSEKELEKIRPLLEDNDKLETTDAYMKQALQLLLKLK.

It belongs to the RuvA family. As to quaternary structure, homotetramer. Forms an RuvA(8)-RuvB(12)-Holliday junction (HJ) complex. HJ DNA is sandwiched between 2 RuvA tetramers; dsDNA enters through RuvA and exits via RuvB. An RuvB hexamer assembles on each DNA strand where it exits the tetramer. Each RuvB hexamer is contacted by two RuvA subunits (via domain III) on 2 adjacent RuvB subunits; this complex drives branch migration. In the full resolvosome a probable DNA-RuvA(4)-RuvB(12)-RuvC(2) complex forms which resolves the HJ.

Its subcellular location is the cytoplasm. In terms of biological role, the RuvA-RuvB-RuvC complex processes Holliday junction (HJ) DNA during genetic recombination and DNA repair, while the RuvA-RuvB complex plays an important role in the rescue of blocked DNA replication forks via replication fork reversal (RFR). RuvA specifically binds to HJ cruciform DNA, conferring on it an open structure. The RuvB hexamer acts as an ATP-dependent pump, pulling dsDNA into and through the RuvAB complex. HJ branch migration allows RuvC to scan DNA until it finds its consensus sequence, where it cleaves and resolves the cruciform DNA. In Lysinibacillus sphaericus (strain C3-41), this protein is Holliday junction branch migration complex subunit RuvA.